The primary structure comprises 885 residues: MAGVNEIRSTFLDYFRKNGHEVVPSSPLVPRNDPTLMFTNAGMVQFKNVFTGLEHRSYNRATTSQKCVRAGGKHNDLDNVGYTARHHTFFEMLGNFSFGDYFKEDAISFAWNLITREFGLPKDKLLVTVYHTDDDAANFWKKIAGLSDDRIIRIPTSDNFWAMGDTGPCGPCSEIFYDHGDHIWGGPPGSPEEDGDRFIEIWNLVFMQFEQQTPELRIDLPRPSIDTGMGLERIAAVLQGVHDNYDIDLFKALIRASEEATGVKAEGDFRASHRVIADHLRASSFLIADGVLPSNEGRGYVLRRIMRRAMRHAQLLGAKEPLMWRLLPALIREMGQAYPELIRAESLISETLKLEETRFRKTLERGLGLLSDASENLAEGDRLDGETAFKLYDTYGFPLDLTQDALRQRGIAVDTEGFNVAMERQKAEARANWTGSGEAATETIWFGIKDKVGATEFLGYETESAEGVIASLVRDGVEVPSVREGETISVVVNQTPFYGESGGQQGDTGTISGEGFVIAVKDTQKKGEGVFVHIGEVTEGTAKAGDVVELKVDSARRTRIRSNHSATHLLHEALRETLGTHVAQKGSLVAPDRLRFDFSHPKPISAEELEAVENLANEIILQNAPVTTRLMAVDDAIAEGAMALFGEKYGDEVRVVSMGTAKHGSKAGKAYSVELCGGTHVRQTGDIGLVRIISEGGVAAGVRRLEALTGEAARLYLEEQDERVKAIASALKTTSADVLDRVNALIDERKKLERELADARKKLALGGGSSDGGSAVEAVNGVNFLGKIVTGVSPRDLKPLADEGKKQVGSGVVLFIGVGEDGKASAVAAVTEDMVGRFSAVDLVRAASAALGGAGGGGRPDMAQAGGPDGAKAADAIAAVKALIA.

Residues histidine 564, histidine 568, cysteine 676, and histidine 680 each contribute to the Zn(2+) site.

Belongs to the class-II aminoacyl-tRNA synthetase family. Zn(2+) serves as cofactor.

The protein resides in the cytoplasm. It carries out the reaction tRNA(Ala) + L-alanine + ATP = L-alanyl-tRNA(Ala) + AMP + diphosphate. Catalyzes the attachment of alanine to tRNA(Ala) in a two-step reaction: alanine is first activated by ATP to form Ala-AMP and then transferred to the acceptor end of tRNA(Ala). Also edits incorrectly charged Ser-tRNA(Ala) and Gly-tRNA(Ala) via its editing domain. The sequence is that of Alanine--tRNA ligase from Brucella abortus (strain 2308).